A 479-amino-acid polypeptide reads, in one-letter code: Nuclear receptor subfamily 6 group A member 1 (479 aa).

The disordered stretch occupies residues 1-32 (MERDERPPSGGGGGGGSAGFLEPPAALPPPPR). The segment covering 9 to 18 (SGGGGGGGSA) has biased composition (gly residues). The segment at residues 57–132 (QRTCLICGDR…MGMNRKAIRE (76 aa)) is a DNA-binding region (nuclear receptor). 8 residues coordinate Zn(2+): cysteine 60, cysteine 63, cysteine 77, cysteine 80, cysteine 96, cysteine 102, cysteine 112, and cysteine 115. 2 consecutive NR C4-type zinc fingers follow at residues 60–80 (CLIC…CEGC) and 96–120 (CSRD…LLKC). Disordered stretches follow at residues 131–150 (REDG…QISE) and 162–198 (FEEE…TLSS). Over residues 165 to 177 (EANHWSNHGDSDH) the composition is skewed to basic and acidic residues. The interval 172 to 252 (HGDSDHSSPG…RSLDPQSYSL (81 aa)) is sufficient for interaction with UIMC1. Polar residues predominate over residues 178–198 (SSPGNRASESNQPSPGSTLSS). Positions 248-479 (QSYSLIHQLV…HSCKTSVGKE (232 aa)) constitute an NR LBD domain.

The protein belongs to the nuclear hormone receptor family. NR6 subfamily. As to quaternary structure, homodimer. Interacts with UIMC1.

Its subcellular location is the nucleus. In terms of biological role, orphan nuclear receptor that binds to a response element containing the sequence 5'-TCAAGGTCA-3'. Acts as a regulator of embryonic stem cell pluripotency by mediating repression of POU5F1/OCT4: binds to the DR0 element within the POU5F1/OCT4 promoter and inhibits POU5F1/OCT4 expression during embryonic stem cell differentiation. Involved in the regulation of gene expression in germ cell development during gametogenesis. This chain is Nuclear receptor subfamily 6 group A member 1 (NR6A1), found in Sus scrofa (Pig).